The following is a 64-amino-acid chain: Large ribosomal subunit protein uL29 (64 aa).

Belongs to the universal ribosomal protein uL29 family.

In Synechococcus elongatus (strain ATCC 33912 / PCC 7942 / FACHB-805) (Anacystis nidulans R2), this protein is Large ribosomal subunit protein uL29.